The following is a 489-amino-acid chain: Rhamnulokinase (489 aa).

13 to 17 (ASSGR) serves as a coordination point for ATP. A disulfide bridge connects residues C68 and C222. Residues G83 and 236–238 (HDT) contribute to the substrate site. The Proton acceptor role is filled by D237. Position 259 (T259) interacts with ATP. N296 serves as a coordination point for substrate. Q304 is a binding site for ATP. A disulfide bridge connects residues C353 and C370. G402 lines the ATP pocket. C413 and C417 form a disulfide bridge.

This sequence belongs to the rhamnulokinase family. Mg(2+) serves as cofactor.

It catalyses the reaction L-rhamnulose + ATP = L-rhamnulose 1-phosphate + ADP + H(+). It functions in the pathway carbohydrate degradation; L-rhamnose degradation; glycerone phosphate from L-rhamnose: step 2/3. Its function is as follows. Involved in the catabolism of L-rhamnose (6-deoxy-L-mannose). Catalyzes the transfer of the gamma-phosphate group from ATP to the 1-hydroxyl group of L-rhamnulose to yield L-rhamnulose 1-phosphate. The polypeptide is Rhamnulokinase (Enterobacter sp. (strain 638)).